Here is a 96-residue protein sequence, read N- to C-terminus: Muconolactone Delta-isomerase (96 aa).

It belongs to the muconolactone Delta-isomerase family. As to quaternary structure, homodecamer.

It carries out the reaction (S)-muconolactone = (4,5-dihydro-5-oxofuran-2-yl)-acetate. The protein operates within aromatic compound metabolism; beta-ketoadipate pathway; 5-oxo-4,5-dihydro-2-furylacetate from catechol: step 3/3. This chain is Muconolactone Delta-isomerase (catC), found in Pseudomonas putida (Arthrobacter siderocapsulatus).